Here is a 276-residue protein sequence, read N- to C-terminus: Borealin (276 aa).

The tract at residues 111–158 is disordered; sequence KEAKSSANSEDENMAPLKSTMKKKKASKKAPSTSKKPRTLSISKQGGT.

This sequence belongs to the borealin family. In terms of assembly, component of the CPC complex.

The protein localises to the nucleus. The protein resides in the chromosome. It is found in the centromere. Its subcellular location is the cytoplasm. It localises to the cytoskeleton. The protein localises to the spindle. Functionally, component of the chromosomal passenger complex (CPC), a complex that acts as a key regulator of mitosis. The CPC complex has essential functions at the centromere in ensuring correct chromosome alignment and segregation and is required for chromatin-induced microtubule stabilization and spindle assembly. In Danio rerio (Zebrafish), this protein is Borealin (cdca8).